Consider the following 373-residue polypeptide: Alpha-ketoglutarate dependent kainoid synthase (373 aa).

In terms of domain architecture, Fe2OG dioxygenase spans T204–P320. Residues H235, D237, and H296 each coordinate Fe cation. Residue R311 participates in 2-oxoglutarate binding.

Belongs to the iron/ascorbate-dependent oxidoreductase family. Requires Fe(2+) as cofactor.

The enzyme catalyses N-(7'-carboxy-7'-demethylgeranyl)-L-glutamate + 2-oxoglutarate + O2 = isodomoate A + succinate + CO2 + H2O. It carries out the reaction N-geranyl-L-glutamate + 2-oxoglutarate + O2 = dainate A + succinate + CO2 + H2O. Its pathway is secondary metabolite biosynthesis. Iron/ascorbate-dependent oxidoreductase: part of the gene cluster that mediates the biosynthesis of domoic acid (DA) and derivatives, natural products with neurochemical activity acting as ionotropic glutamate receptor (iGluR) agonists, thus being neurotoxins causing amnesic shellfish poisoning (ASP). Catalyzes the conversion of 7'-N-carboxy-L-geranyl-L-glutamic acid (cNGG) to isodomoic acid-A. Also mediates the conversion of N-geranyl-L-glutamic acid (L-NGG) to dainic acid A. In Pseudo-nitzschia multiseries (Marine planktonic diatom), this protein is Alpha-ketoglutarate dependent kainoid synthase.